We begin with the raw amino-acid sequence, 270 residues long: MAVITKIEVQKRSKERFNIYIDKGQGEEYGFSVNEVILIKHGLQKGLEIDEIALGNILYNEEVQKAYLQAISYLSYQMRTKLEIEDFLRKKEVGQAIISEVVSKLLHDRYINDKEYAILYTRTQSNVNRKGPTVIKRELLNKGVQDLIITHSLQEYPKEKQIENALILIEKKKKSYQKHSFLQMKLKLDEMLVRKGYSRDVIQICLEELKDEKDDEKQQEALHYHGNKYYEKYKKYDGWTLENKMKQALYRKGFSIDEIEIFLQMKREEG.

This sequence belongs to the RecX family.

It is found in the cytoplasm. In terms of biological role, modulates RecA activity. The chain is Regulatory protein RecX from Bacillus cereus (strain 03BB102).